Here is a 170-residue protein sequence, read N- to C-terminus: Disulfide bond formation protein B (170 aa).

The Cytoplasmic segment spans residues Met-1 to Leu-14. The helical transmembrane segment at Leu-15–Tyr-31 threads the bilayer. The Periplasmic portion of the chain corresponds to Leu-32 to Tyr-49. A disulfide bridge connects residues Cys-41 and Cys-44. A helical transmembrane segment spans residues Phe-50–Ile-64. Residues Arg-65 to Trp-71 are Cytoplasmic-facing. Residues Val-72–Ala-89 traverse the membrane as a helical segment. Residues Arg-90 to Gly-144 are Periplasmic-facing. Cys-102 and Cys-130 are disulfide-bonded. Residues Trp-145–Arg-163 form a helical membrane-spanning segment. The Cytoplasmic segment spans residues His-164 to Gly-170.

This sequence belongs to the DsbB family.

The protein localises to the cell inner membrane. Required for disulfide bond formation in some periplasmic proteins. Acts by oxidizing the DsbA protein. The chain is Disulfide bond formation protein B from Burkholderia ambifaria (strain ATCC BAA-244 / DSM 16087 / CCUG 44356 / LMG 19182 / AMMD) (Burkholderia cepacia (strain AMMD)).